A 360-amino-acid polypeptide reads, in one-letter code: Photosystem II protein D1 2 (360 aa).

The next 3 membrane-spanning stretches (helical) occupy residues 29 to 46 (YIGWFGVLMIPTLLAATT), 118 to 133 (HFLTGVFCYLGREWEL), and 142 to 156 (WICLAFSAPVAAATA). A chlorophyll a-binding site is contributed by H118. Y126 provides a ligand contact to pheophytin a. Residues D170 and E189 each contribute to the [CaMn4O5] cluster site. A helical transmembrane segment spans residues 197 to 218 (FHMLGVAGVFGGSLFSAMHGSL). H198 serves as a coordination point for chlorophyll a. A quinone-binding positions include H215 and 264-265 (SF). Fe cation is bound at residue H215. H272 contributes to the Fe cation binding site. Residues 274–288 (FLAAWPVIGIWFTAL) form a helical membrane-spanning segment. The [CaMn4O5] cluster site is built by H332, E333, D342, and A344. Positions 345 to 360 (AGEVAPVALTAPAING) are excised as a propeptide.

The protein belongs to the reaction center PufL/M/PsbA/D family. As to quaternary structure, PSII is composed of 1 copy each of membrane proteins PsbA, PsbB, PsbC, PsbD, PsbE, PsbF, PsbH, PsbI, PsbJ, PsbK, PsbL, PsbM, PsbT, PsbX, PsbY, PsbZ, Psb30/Ycf12, peripheral proteins PsbO, CyanoQ (PsbQ), PsbU, PsbV and a large number of cofactors. It forms dimeric complexes. The D1/D2 heterodimer binds P680, chlorophylls that are the primary electron donor of PSII, and subsequent electron acceptors. It shares a non-heme iron and each subunit binds pheophytin, quinone, additional chlorophylls, carotenoids and lipids. D1 provides most of the ligands for the Mn4-Ca-O5 cluster of the oxygen-evolving complex (OEC). There is also a Cl(-1) ion associated with D1 and D2, which is required for oxygen evolution. The PSII complex binds additional chlorophylls, carotenoids and specific lipids. serves as cofactor. In terms of processing, tyr-161 forms a radical intermediate that is referred to as redox-active TyrZ, YZ or Y-Z. C-terminally processed by CtpA; processing is essential to allow assembly of the oxygen-evolving complex and thus photosynthetic growth.

Its subcellular location is the cellular thylakoid membrane. It catalyses the reaction 2 a plastoquinone + 4 hnu + 2 H2O = 2 a plastoquinol + O2. Its function is as follows. Photosystem II (PSII) is a light-driven water:plastoquinone oxidoreductase that uses light energy to abstract electrons from H(2)O, generating O(2) and a proton gradient subsequently used for ATP formation. It consists of a core antenna complex that captures photons, and an electron transfer chain that converts photonic excitation into a charge separation. The D1/D2 (PsbA/PsbD) reaction center heterodimer binds P680, the primary electron donor of PSII as well as several subsequent electron acceptors. The sequence is that of Photosystem II protein D1 2 from Trichormus variabilis (strain ATCC 29413 / PCC 7937) (Anabaena variabilis).